The sequence spans 237 residues: Ribose-5-phosphate isomerase A (237 aa).

Residues 32-35 (TGRT), 85-88 (DGAD), and 99-102 (KGGG) contribute to the substrate site. Glu-108 (proton acceptor) is an active-site residue. A substrate-binding site is contributed by Arg-126.

The protein belongs to the ribose 5-phosphate isomerase family. In terms of assembly, homodimer.

The enzyme catalyses aldehydo-D-ribose 5-phosphate = D-ribulose 5-phosphate. It participates in carbohydrate degradation; pentose phosphate pathway; D-ribose 5-phosphate from D-ribulose 5-phosphate (non-oxidative stage): step 1/1. In terms of biological role, catalyzes the reversible conversion of ribose-5-phosphate to ribulose 5-phosphate. The protein is Ribose-5-phosphate isomerase A of Aeropyrum pernix (strain ATCC 700893 / DSM 11879 / JCM 9820 / NBRC 100138 / K1).